Consider the following 467-residue polypeptide: UDP-N-acetylmuramoylalanine--D-glutamate ligase (467 aa).

121-127 serves as a coordination point for ATP; it reads GTNGKST.

This sequence belongs to the MurCDEF family.

Its subcellular location is the cytoplasm. The enzyme catalyses UDP-N-acetyl-alpha-D-muramoyl-L-alanine + D-glutamate + ATP = UDP-N-acetyl-alpha-D-muramoyl-L-alanyl-D-glutamate + ADP + phosphate + H(+). The protein operates within cell wall biogenesis; peptidoglycan biosynthesis. Cell wall formation. Catalyzes the addition of glutamate to the nucleotide precursor UDP-N-acetylmuramoyl-L-alanine (UMA). The sequence is that of UDP-N-acetylmuramoylalanine--D-glutamate ligase from Brucella suis biovar 1 (strain 1330).